Reading from the N-terminus, the 427-residue chain is Trigger factor (427 aa).

In terms of domain architecture, PPIase FKBP-type spans 163–248; the sequence is GDTVVIDFVG…IHEVKTKEVP (86 aa).

It belongs to the FKBP-type PPIase family. Tig subfamily.

The protein localises to the cytoplasm. It catalyses the reaction [protein]-peptidylproline (omega=180) = [protein]-peptidylproline (omega=0). Functionally, involved in protein export. Acts as a chaperone by maintaining the newly synthesized protein in an open conformation. Functions as a peptidyl-prolyl cis-trans isomerase. This Streptococcus agalactiae serotype V (strain ATCC BAA-611 / 2603 V/R) protein is Trigger factor.